The primary structure comprises 1060 residues: Positive regulator of purine utilization (1060 aa).

A compositionally biased stretch (polar residues) spans 1-15; it reads MLNPSTSDIHTSPTA. Positions 1 to 48 are disordered; it reads MLNPSTSDIHTSPTAVGNGRKRPHPIADSGSAMPSDPSAQQLPHPANE. Residues 67–94 constitute a DNA-binding region (zn(2)-C6 fungal-type); that stretch reads CNRCRQRKNRCDQRLPRCQACEKAGVRC. Disordered regions lie at residues 163 to 207, 251 to 282, 367 to 391, 811 to 862, and 877 to 969; these read EIAA…DAED, SVPG…TTRD, AEDQ…SRQY, VQTS…RFDM, and RQGS…PSGM. Basic and acidic residues-rich tracts occupy residues 170-182, 189-207, and 260-269; these read SNDK…KEKN, KASR…DAED, and GPSRPKERLP. A compositionally biased stretch (polar residues) spans 272 to 282; sequence ATGTEGSTTRD. Basic and acidic residues predominate over residues 367–377; sequence AEDQKEGRDHS. A compositionally biased stretch (polar residues) spans 811–831; sequence VQTSTSGSRQFNATQSRSRPY. Composition is skewed to low complexity over residues 832–859 and 930–952; these read SRQQ…PLPR and PRYY…AASG.

The protein resides in the nucleus. Mediates the induction of a number of unlinked genes involved in purine utilization. Binds to the consensus sequence 5'-TCGGNNNNNNCCGA-3'. This is Positive regulator of purine utilization (uaY) from Emericella nidulans (strain FGSC A4 / ATCC 38163 / CBS 112.46 / NRRL 194 / M139) (Aspergillus nidulans).